The chain runs to 609 residues: Aminopeptidase ltah-1.1 (609 aa).

Residues 137–139 and 268–273 each bind substrate; these read QCQ and PFGGME. His297 is a Zn(2+) binding site. Glu298 acts as the Proton acceptor in catalysis. Zn(2+)-binding residues include His301 and Glu320. The active-site Proton donor is Tyr387. 564–566 is a substrate binding site; that stretch reads RMK.

The protein belongs to the peptidase M1 family. The cofactor is Zn(2+).

Its subcellular location is the cytoplasm. It carries out the reaction Release of N-terminal Arg and Lys from oligopeptides when P1' is not Pro. Also acts on arylamides of Arg and Lys.. In terms of biological role, aminopeptidase which preferentially removes N-terminal Arg and Lys residues from peptides and proteins. This is Aminopeptidase ltah-1.1 from Caenorhabditis elegans.